Consider the following 1020-residue polypeptide: Glycine dehydrogenase (decarboxylating), mitochondrial (1020 aa).

A mitochondrion-targeting transit peptide spans 1–35; it reads MQSCARAWGLRLGRGVGGGRRLAGGSGPCWAPRSR. The tract at residues 21-46 is disordered; sequence RLAGGSGPCWAPRSRDSSSGGGDSAA. Lys-447, Lys-514, Lys-648, and Lys-664 each carry N6-acetyllysine. Lys-754 is subject to N6-(pyridoxal phosphate)lysine.

This sequence belongs to the GcvP family. In terms of assembly, homodimer. Interacts with GCSH. The glycine cleavage system is composed of four proteins: P (GLDC), T (GCST), L (DLD) and H (GCSH). It depends on pyridoxal 5'-phosphate as a cofactor.

The protein resides in the mitochondrion. It catalyses the reaction N(6)-[(R)-lipoyl]-L-lysyl-[glycine-cleavage complex H protein] + glycine + H(+) = N(6)-[(R)-S(8)-aminomethyldihydrolipoyl]-L-lysyl-[glycine-cleavage complex H protein] + CO2. With respect to regulation, stimulated by lipoic acid. Inhibited in presence of methylamine. Its function is as follows. The glycine cleavage system catalyzes the degradation of glycine. The P protein (GLDC) binds the alpha-amino group of glycine through its pyridoxal phosphate cofactor; CO(2) is released and the remaining methylamine moiety is then transferred to the lipoamide cofactor of the H protein (GCSH). This chain is Glycine dehydrogenase (decarboxylating), mitochondrial, found in Homo sapiens (Human).